The primary structure comprises 263 residues: Protein STK_14130 (263 aa).

This sequence belongs to the CinA family.

The sequence is that of Protein STK_14130 from Sulfurisphaera tokodaii (strain DSM 16993 / JCM 10545 / NBRC 100140 / 7) (Sulfolobus tokodaii).